The sequence spans 802 residues: G-type lectin S-receptor-like serine/threonine-protein kinase At1g61550 (802 aa).

The first 19 residues, 1-19, serve as a signal peptide directing secretion; that stretch reads MTRFACFLFSTLLLSFSYA. In terms of domain architecture, Bulb-type lectin spans 20-139; that stretch reads AITPTSPLSI…VSGITLWQSF (120 aa). At 20-421 the chain is on the extracellular side; it reads AITPTSPLSI…EMGGNQRKKT (402 aa). 5 N-linked (GlcNAc...) asparagine glycosylation sites follow: Asn48, Asn89, Asn112, Asn231, and Asn262. Positions 273–309 constitute an EGF-like domain; the sequence is PANTCDFYGVCGPFGLCVMSIPPKCKCFKGFVPQFSE. 2 cysteine pairs are disulfide-bonded: Cys277–Cys289 and Cys283–Cys297. Residues Asn315, Asn331, and Asn370 are each glycosylated (N-linked (GlcNAc...) asparagine). The PAN domain maps to 328 to 410; it reads CQGNSTGRHV…GELLSIRLAS (83 aa). Cystine bridges form between Cys363/Cys384 and Cys367/Cys373. The helical transmembrane segment at 422 to 442 threads the bilayer; the sequence is IIASIVSISLFVTLASAAFGF. The Cytoplasmic portion of the chain corresponds to 443–802; that stretch reads WRYRLKHNAI…EVTQSVVLGR (360 aa). The Protein kinase domain occupies 489 to 774; that stretch reads FSLVNKLGQG…DLPLPKEPTF (286 aa). ATP is bound by residues 495–503 and Lys517; that span reads LGQGGFGPV. Phosphoserine is present on residues Ser523 and Ser538. Residues 578-595 are caM-binding; sequence RKRVEIDWPKRFSIIQGI. Asp614 serves as the catalytic Proton acceptor. A phosphoserine mark is found at Ser618 and Ser631. Thr648 is modified (phosphothreonine). Ser691 carries the phosphoserine modification.

It belongs to the protein kinase superfamily. Ser/Thr protein kinase family.

Its subcellular location is the cell membrane. The enzyme catalyses L-seryl-[protein] + ATP = O-phospho-L-seryl-[protein] + ADP + H(+). The catalysed reaction is L-threonyl-[protein] + ATP = O-phospho-L-threonyl-[protein] + ADP + H(+). The sequence is that of G-type lectin S-receptor-like serine/threonine-protein kinase At1g61550 from Arabidopsis thaliana (Mouse-ear cress).